The primary structure comprises 250 residues: Global transcriptional regulator CodY (250 aa).

Residues 1–146 (MTLLEKTRKL…GATVVGLEIL (146 aa)) form a GAF domain region. The segment at residues 194 to 213 (ASKIADKVGITRSVIVNALR) is a DNA-binding region (H-T-H motif).

This sequence belongs to the CodY family.

It is found in the cytoplasm. DNA-binding global transcriptional regulator which is involved in the adaptive response to starvation and acts by directly or indirectly controlling the expression of numerous genes in response to nutrient availability. During rapid exponential growth, CodY is highly active and represses genes whose products allow adaptation to nutrient depletion. The polypeptide is Global transcriptional regulator CodY (Caldanaerobacter subterraneus subsp. tengcongensis (strain DSM 15242 / JCM 11007 / NBRC 100824 / MB4) (Thermoanaerobacter tengcongensis)).